The primary structure comprises 235 residues: Exosome complex component RRP46 (235 aa).

Positions 1–13 (MEEETHTDAKIRA) are enriched in basic and acidic residues. The interval 1 to 24 (MEEETHTDAKIRAENGTGSSPRGP) is disordered. Phosphoserine is present on S20.

This sequence belongs to the RNase PH family. As to quaternary structure, homodimer. Component of the RNA exosome core complex (Exo-9), composed of EXOSC1, EXOSC2, EXOSC3, EXOSC4, EXOSC5, EXOSC6, EXOSC7, EXOSC8 and EXOSC9; within the complex interacts with EXOSC3, EXOSC8, and EXOSC9. The catalytically inactive RNA exosome core complex (Exo-9) associates with the catalytic subunit EXOSC10/RRP6. Exo-9 may associate with DIS3 to form the nucleolar exosome complex, or DIS3L to form the cytoplasmic exosome complex. Exo-9 is formed by a hexameric base ring consisting of the heterodimers EXOSC4-EXOSC9, EXOSC5-EXOSC8 and EXOSC6-EXOSC7, and a cap ring consisting of EXOSC1, EXOSC2 and EXOSC3. The RNA exosome complex associates with cofactors C1D/RRP47, MPHOSPH6/MPP6 and MTREX/MTR4. Interacts with GTPBP1. Interacts with ZC3HAV1. Interacts with DDX17 only in the presence of ZC3HAV1 in an RNA-independent manner. As to expression, highly expressed in a variety of hematopoietic and epithelial tumor cell lines, but not in normal hematopoietic tissues or other normal tissue, with the exception of testis.

It is found in the nucleus. The protein localises to the nucleolus. The protein resides in the cytoplasm. Non-catalytic component of the RNA exosome complex which has 3'-&gt;5' exoribonuclease activity and participates in a multitude of cellular RNA processing and degradation events. In the nucleus, the RNA exosome complex is involved in proper maturation of stable RNA species such as rRNA, snRNA and snoRNA, in the elimination of RNA processing by-products and non-coding 'pervasive' transcripts, such as antisense RNA species and promoter-upstream transcripts (PROMPTs), and of mRNAs with processing defects, thereby limiting or excluding their export to the cytoplasm. The RNA exosome may be involved in Ig class switch recombination (CSR) and/or Ig variable region somatic hypermutation (SHM) by targeting AICDA deamination activity to transcribed dsDNA substrates. In the cytoplasm, the RNA exosome complex is involved in general mRNA turnover and specifically degrades inherently unstable mRNAs containing AU-rich elements (AREs) within their 3' untranslated regions, and in RNA surveillance pathways, preventing translation of aberrant mRNAs. It seems to be involved in degradation of histone mRNA. The catalytic inactive RNA exosome core complex of 9 subunits (Exo-9) is proposed to play a pivotal role in the binding and presentation of RNA for ribonucleolysis, and to serve as a scaffold for the association with catalytic subunits and accessory proteins or complexes. In vitro, EXOSC5 does not bind or digest single-stranded RNA and binds to double-stranded DNA without detectable DNase activity. This is Exosome complex component RRP46 (EXOSC5) from Homo sapiens (Human).